We begin with the raw amino-acid sequence, 489 residues long: Rhamnulokinase (489 aa).

ATP is bound at residue 13-17 (ASSGR). A disulfide bridge links cysteine 68 with cysteine 222. Residues glycine 83 and 236 to 238 (HDT) each bind substrate. Residue aspartate 237 is the Proton acceptor of the active site. An ATP-binding site is contributed by threonine 259. Position 296 (asparagine 296) interacts with substrate. Position 304 (glutamine 304) interacts with ATP. Cysteine 353 and cysteine 370 are joined by a disulfide. Position 402 (glycine 402) interacts with ATP. A disulfide bridge links cysteine 413 with cysteine 417.

This sequence belongs to the rhamnulokinase family. In terms of assembly, monomer. It depends on Mg(2+) as a cofactor.

The catalysed reaction is L-rhamnulose + ATP = L-rhamnulose 1-phosphate + ADP + H(+). Its pathway is carbohydrate degradation; L-rhamnose degradation; glycerone phosphate from L-rhamnose: step 2/3. Its function is as follows. Involved in the catabolism of L-rhamnose (6-deoxy-L-mannose). Catalyzes the transfer of the gamma-phosphate group from ATP to the 1-hydroxyl group of L-rhamnulose to yield L-rhamnulose 1-phosphate. The chain is Rhamnulokinase from Escherichia fergusonii (strain ATCC 35469 / DSM 13698 / CCUG 18766 / IAM 14443 / JCM 21226 / LMG 7866 / NBRC 102419 / NCTC 12128 / CDC 0568-73).